The chain runs to 804 residues: Leucine--tRNA ligase (804 aa).

Residues Pro-40 to His-51 carry the 'HIGH' region motif. The short motif at Lys-576–Ser-580 is the 'KMSKS' region element. Position 579 (Lys-579) interacts with ATP.

Belongs to the class-I aminoacyl-tRNA synthetase family.

The protein resides in the cytoplasm. It catalyses the reaction tRNA(Leu) + L-leucine + ATP = L-leucyl-tRNA(Leu) + AMP + diphosphate. The chain is Leucine--tRNA ligase from Enterococcus faecalis (strain ATCC 700802 / V583).